The chain runs to 1058 residues: Carbamoyl phosphate synthase large chain (1058 aa).

The segment at 1–401 (MPKRTDIQKI…SLLKACRSLE (401 aa)) is carboxyphosphate synthetic domain. Residues R129, R169, G175, G176, R208, I210, E215, G241, I242, H243, Q284, and E298 each coordinate ATP. The ATP-grasp 1 domain maps to 133 to 327 (KQLMEELEQP…IAKLAAKIAV (195 aa)). The Mg(2+) site is built by Q284, E298, and N300. Mn(2+) contacts are provided by Q284, E298, and N300. The oligomerization domain stretch occupies residues 402-546 (IGVHHNEIPE…YSTYGWENES (145 aa)). Residues 547–929 (IRSDKESVLV…ALYKAFEASY (383 aa)) are carbamoyl phosphate synthetic domain. The ATP-grasp 2 domain maps to 671 to 861 (EQALKELDIP…MAQVATKLIL (191 aa)). ATP is bound by residues R707, S746, I748, E752, G777, V778, H779, S780, Q820, and E832. Q820, E832, and N834 together coordinate Mg(2+). Q820, E832, and N834 together coordinate Mn(2+). Residues 930-1058 (LHLPTFGNVV…ESRSFVTEAI (129 aa)) enclose the MGS-like domain. The interval 930-1058 (LHLPTFGNVV…ESRSFVTEAI (129 aa)) is allosteric domain.

Belongs to the CarB family. Composed of two chains; the small (or glutamine) chain promotes the hydrolysis of glutamine to ammonia, which is used by the large (or ammonia) chain to synthesize carbamoyl phosphate. Tetramer of heterodimers (alpha,beta)4. It depends on Mg(2+) as a cofactor. Mn(2+) serves as cofactor.

The catalysed reaction is hydrogencarbonate + L-glutamine + 2 ATP + H2O = carbamoyl phosphate + L-glutamate + 2 ADP + phosphate + 2 H(+). The enzyme catalyses hydrogencarbonate + NH4(+) + 2 ATP = carbamoyl phosphate + 2 ADP + phosphate + 2 H(+). It functions in the pathway amino-acid biosynthesis; L-arginine biosynthesis; carbamoyl phosphate from bicarbonate: step 1/1. It participates in pyrimidine metabolism; UMP biosynthesis via de novo pathway; (S)-dihydroorotate from bicarbonate: step 1/3. Large subunit of the glutamine-dependent carbamoyl phosphate synthetase (CPSase). CPSase catalyzes the formation of carbamoyl phosphate from the ammonia moiety of glutamine, carbonate, and phosphate donated by ATP, constituting the first step of 2 biosynthetic pathways, one leading to arginine and/or urea and the other to pyrimidine nucleotides. The large subunit (synthetase) binds the substrates ammonia (free or transferred from glutamine from the small subunit), hydrogencarbonate and ATP and carries out an ATP-coupled ligase reaction, activating hydrogencarbonate by forming carboxy phosphate which reacts with ammonia to form carbamoyl phosphate. This chain is Carbamoyl phosphate synthase large chain, found in Streptococcus pneumoniae (strain P1031).